Here is a 219-residue protein sequence, read N- to C-terminus: Cytidylate kinase (219 aa).

Residue 10–18 (GPAAAGKST) participates in ATP binding.

This sequence belongs to the cytidylate kinase family. Type 1 subfamily.

The protein localises to the cytoplasm. The enzyme catalyses CMP + ATP = CDP + ADP. It catalyses the reaction dCMP + ATP = dCDP + ADP. In Staphylococcus aureus (strain JH9), this protein is Cytidylate kinase.